We begin with the raw amino-acid sequence, 516 residues long: GMP synthase [glutamine-hydrolyzing] (516 aa).

Residues 8–198 form the Glutamine amidotransferase type-1 domain; that stretch reads KILILDFGSQ…VVNICGCDTL (191 aa). The active-site Nucleophile is Cys-84. Residues His-172 and Glu-174 contribute to the active site. A GMPS ATP-PPase domain is found at 199 to 391; the sequence is WNIENIIEND…LGLPYNMLYR (193 aa). An ATP-binding site is contributed by 226 to 232; the sequence is SGGVDSS.

In terms of assembly, homodimer.

The enzyme catalyses XMP + L-glutamine + ATP + H2O = GMP + L-glutamate + AMP + diphosphate + 2 H(+). The protein operates within purine metabolism; GMP biosynthesis; GMP from XMP (L-Gln route): step 1/1. Functionally, catalyzes the synthesis of GMP from XMP. This is GMP synthase [glutamine-hydrolyzing] from Francisella tularensis subsp. holarctica (strain LVS).